We begin with the raw amino-acid sequence, 349 residues long: Protein RecA (349 aa).

Residue 64 to 71 (GPESSGKT) coordinates ATP.

Belongs to the RecA family.

The protein localises to the cytoplasm. In terms of biological role, can catalyze the hydrolysis of ATP in the presence of single-stranded DNA, the ATP-dependent uptake of single-stranded DNA by duplex DNA, and the ATP-dependent hybridization of homologous single-stranded DNAs. It interacts with LexA causing its activation and leading to its autocatalytic cleavage. The sequence is that of Protein RecA from Rhodopseudomonas palustris (strain ATCC BAA-98 / CGA009).